The sequence spans 567 residues: Proline--tRNA ligase (567 aa).

This sequence belongs to the class-II aminoacyl-tRNA synthetase family. ProS type 1 subfamily. In terms of assembly, homodimer.

Its subcellular location is the cytoplasm. It catalyses the reaction tRNA(Pro) + L-proline + ATP = L-prolyl-tRNA(Pro) + AMP + diphosphate. Functionally, catalyzes the attachment of proline to tRNA(Pro) in a two-step reaction: proline is first activated by ATP to form Pro-AMP and then transferred to the acceptor end of tRNA(Pro). As ProRS can inadvertently accommodate and process non-cognate amino acids such as alanine and cysteine, to avoid such errors it has two additional distinct editing activities against alanine. One activity is designated as 'pretransfer' editing and involves the tRNA(Pro)-independent hydrolysis of activated Ala-AMP. The other activity is designated 'posttransfer' editing and involves deacylation of mischarged Ala-tRNA(Pro). The misacylated Cys-tRNA(Pro) is not edited by ProRS. In Stenotrophomonas maltophilia (strain R551-3), this protein is Proline--tRNA ligase.